We begin with the raw amino-acid sequence, 963 residues long: Ras-interacting protein 1 (963 aa).

Positions 1-10 (MLSGERKEGG) are enriched in basic and acidic residues. Disordered stretches follow at residues 1-22 (MLSG…LPVG) and 35-118 (LGRR…AQRW). Over residues 41 to 57 (SAASVKSSSSDTGSRSS) the composition is skewed to low complexity. R94 bears the Omega-N-methylarginine mark. Over residues 96–113 (SGTGTTGSSGAGGPGTPG) the composition is skewed to gly residues. Positions 144 to 259 (PPGVLKIFGA…RRFELRGREE (116 aa)) constitute a Ras-associating domain. 3 positions are modified to phosphoserine: S188, S280, and S292. The interval 267–356 (AFGAADSEGT…LSMAPGAADA (90 aa)) is disordered. Residues 290-301 (AASGGAALASPG) show a composition bias toward low complexity. The span at 302–313 (PGTGSGAPAGSG) shows a compositional bias: gly residues. Residues 320 to 333 (NLSLRRSVSELSLQ) show a composition bias toward low complexity. 4 positions are modified to phosphoserine: S326, S328, S331, and S419. The region spanning 600-897 (GRLARLIKEA…PPAEREAVDT (298 aa)) is the Dilute domain.

As to quaternary structure, interacts with Ras family members that have been activated by GTP binding. Interacts with HRAS, RAP1A, RAP2, RRAS, RAF1 and RRAS2. Interacts with MYH9 and ARHGAP29. Highly expressed in heart. Detected at lower levels in placenta and pancreas.

The protein localises to the cytoplasm. The protein resides in the perinuclear region. It localises to the golgi apparatus. It is found in the golgi stack. Its function is as follows. Required for the proper formation of vascular structures that develop via both vasculogenesis and angiogenesis. Acts as a critical and vascular-specific regulator of GTPase signaling, cell architecture, and adhesion, which is essential for endothelial cell morphogenesis and blood vessel tubulogenesis. Regulates the activity of Rho GTPases in part by recruiting ARHGAP29 and suppressing RhoA signaling and dampening ROCK and MYH9 activities in endothelial cells. May act as effector for Golgi-bound HRAS and other Ras-like proteins. May promote HRAS-mediated transformation. Negative regulator of amino acid starvation-induced autophagy. In Homo sapiens (Human), this protein is Ras-interacting protein 1 (RASIP1).